A 756-amino-acid polypeptide reads, in one-letter code: Anaphase-promoting complex subunit 5 (756 aa).

4 TPR repeats span residues 301–334 (RYAA…AQES), 522–555 (DGRY…KAQN), 581–614 (ISVL…SREY), and 678–711 (YSQQ…EQLR).

It belongs to the APC5 family. As to quaternary structure, the APC/C is composed of at least 12 subunits.

It is found in the nucleus. The protein resides in the cytoplasm. It localises to the cytoskeleton. Its subcellular location is the spindle. It functions in the pathway protein modification; protein ubiquitination. Component of the anaphase promoting complex/cyclosome (APC/C), a cell cycle-regulated E3 ubiquitin ligase that controls progression through mitosis and the G1 phase of the cell cycle. The APC/C complex acts by mediating ubiquitination and subsequent degradation of target proteins: it mainly mediates the formation of 'Lys-11'-linked polyubiquitin chains and, to a lower extent, the formation of 'Lys-48'- and 'Lys-63'-linked polyubiquitin chains. The APC/C complex catalyzes assembly of branched 'Lys-11'-/'Lys-48'-linked branched ubiquitin chains on target proteins. The sequence is that of Anaphase-promoting complex subunit 5 (ANAPC5) from Gallus gallus (Chicken).